Consider the following 112-residue polypeptide: UPF0060 membrane protein SAV_4756 (112 aa).

4 consecutive transmembrane segments (helical) span residues Ala8–Val28, Gly33–Leu53, Ile62–Asp82, and Val91–Gly111.

Belongs to the UPF0060 family.

Its subcellular location is the cell membrane. This Streptomyces avermitilis (strain ATCC 31267 / DSM 46492 / JCM 5070 / NBRC 14893 / NCIMB 12804 / NRRL 8165 / MA-4680) protein is UPF0060 membrane protein SAV_4756.